Here is a 420-residue protein sequence, read N- to C-terminus: MFKKSMNIADYDPVLWQAIENENRRQEEHIELIASENYASPRVMQAQGSQFTNKYAEGYPGKRYYGGCEYADIVEQLAIERAKELFGADYVNVQPHSGSQANAAVYMGLLNPGDTILGMSLAHGGHLTHGASVSFSGKIYHAEQYGITDEGLIDYDALRKQAHDVKPKMIVGGFSAYSQVVDWKKMREIADEVGAYLFVDMAHVAGLVAAGIYPNPLPYAHVVTTTTHKTLGGPRGGLILSSCGDEEIYKKLNSAVFPAGQGGPLVHIIAAKAVCFKEALEPEYKVYQQNVLKNAKAMVEVFKQRCYKVVSNGTENHLFLVDLVSHGLTGKAADAALGKANITVNKNSVPNDPQKPFITSGIRVGTPSVTRRGFNEADVKELAGWMCDVLDAIGKDNEAEVIADTKDKVLAICKRLPVYA.

(6S)-5,6,7,8-tetrahydrofolate contacts are provided by residues Leu121 and 125-127 (GHL). Lys229 carries the N6-(pyridoxal phosphate)lysine modification.

The protein belongs to the SHMT family. Homodimer. The cofactor is pyridoxal 5'-phosphate.

Its subcellular location is the cytoplasm. It catalyses the reaction (6R)-5,10-methylene-5,6,7,8-tetrahydrofolate + glycine + H2O = (6S)-5,6,7,8-tetrahydrofolate + L-serine. It participates in one-carbon metabolism; tetrahydrofolate interconversion. It functions in the pathway amino-acid biosynthesis; glycine biosynthesis; glycine from L-serine: step 1/1. Catalyzes the reversible interconversion of serine and glycine with tetrahydrofolate (THF) serving as the one-carbon carrier. This reaction serves as the major source of one-carbon groups required for the biosynthesis of purines, thymidylate, methionine, and other important biomolecules. Also exhibits THF-independent aldolase activity toward beta-hydroxyamino acids, producing glycine and aldehydes, via a retro-aldol mechanism. The polypeptide is Serine hydroxymethyltransferase (Aggregatibacter actinomycetemcomitans (Actinobacillus actinomycetemcomitans)).